Here is a 501-residue protein sequence, read N- to C-terminus: Nuclear receptor-binding protein 2 (501 aa).

The interval 1–33 (MAAPEPAPRRAREREREREDESEDESDILEESP) is disordered. The span at 7–19 (APRRARERERERE) shows a compositional bias: basic and acidic residues. Acidic residues predominate over residues 20 to 30 (DESEDESDILE). The region spanning 38-306 (QKRREQVNQG…AHSLLFHRVL (269 aa)) is the Protein kinase domain. 2 positions are modified to phosphothreonine: T409 and T411.

This sequence belongs to the protein kinase superfamily. Ser/Thr protein kinase family.

Its subcellular location is the cytoplasm. May regulate apoptosis of neural progenitor cells during their differentiation. The protein is Nuclear receptor-binding protein 2 of Homo sapiens (Human).